We begin with the raw amino-acid sequence, 317 residues long: Methionyl-tRNA formyltransferase (317 aa).

A (6S)-5,6,7,8-tetrahydrofolate-binding site is contributed by 113-116; that stretch reads SLLP.

Belongs to the Fmt family.

It catalyses the reaction L-methionyl-tRNA(fMet) + (6R)-10-formyltetrahydrofolate = N-formyl-L-methionyl-tRNA(fMet) + (6S)-5,6,7,8-tetrahydrofolate + H(+). Its function is as follows. Attaches a formyl group to the free amino group of methionyl-tRNA(fMet). The formyl group appears to play a dual role in the initiator identity of N-formylmethionyl-tRNA by promoting its recognition by IF2 and preventing the misappropriation of this tRNA by the elongation apparatus. The sequence is that of Methionyl-tRNA formyltransferase from Pseudomonas fluorescens (strain SBW25).